Consider the following 398-residue polypeptide: Fructose-bisphosphate aldolase 2, chloroplastic (398 aa).

A chloroplast-targeting transit peptide spans 1 to 46; it reads MASTSLLKASPVLDKSEWVKGQSVLFRQPSSASVVLRNRATSLTVR. Arginine 95 is a binding site for substrate. Residue serine 157 is modified to Phosphoserine. A substrate-binding site is contributed by lysine 185. Phosphoserine is present on serine 215. Glutamate 225 (proton acceptor) is an active-site residue. Catalysis depends on lysine 267, which acts as the Schiff-base intermediate with dihydroxyacetone-P. 309-311 serves as a coordination point for substrate; that stretch reads SGG. Residue lysine 394 is modified to N6,N6,N6-trimethyllysine.

It belongs to the class I fructose-bisphosphate aldolase family. In terms of assembly, homotetramer. Post-translationally, can be trimethylated at Lys-394 by LSMT-L. The methylation level has no influence on the ologomerization state or on the kinetic properties of the enzyme. Phosphorylated on tyrosine residues in response to abscisic acid (ABA) in germinating seeds. In terms of tissue distribution, highly expressed in rosettes leaves.

Its subcellular location is the plastid. It is found in the chloroplast. The protein resides in the plastoglobule. The protein localises to the chloroplast stroma. It carries out the reaction beta-D-fructose 1,6-bisphosphate = D-glyceraldehyde 3-phosphate + dihydroxyacetone phosphate. Its pathway is carbohydrate degradation; glycolysis; D-glyceraldehyde 3-phosphate and glycerone phosphate from D-glucose: step 4/4. In terms of biological role, plays a key role in glycolysis and gluconeogenesis. The polypeptide is Fructose-bisphosphate aldolase 2, chloroplastic (Arabidopsis thaliana (Mouse-ear cress)).